The chain runs to 101 residues: Small ribosomal subunit protein uS14 (101 aa).

Residues R53–G72 are disordered. Residues R61 to P70 are compositionally biased toward basic and acidic residues.

Belongs to the universal ribosomal protein uS14 family. Part of the 30S ribosomal subunit. Contacts proteins S3 and S10.

Functionally, binds 16S rRNA, required for the assembly of 30S particles and may also be responsible for determining the conformation of the 16S rRNA at the A site. The chain is Small ribosomal subunit protein uS14 from Corynebacterium glutamicum (strain R).